The following is a 340-amino-acid chain: Beta-hexosaminidase (340 aa).

Residues D60, R68, R127, and 157–158 contribute to the substrate site; that span reads KH. The Proton donor/acceptor role is filled by H170. The Nucleophile role is filled by D242.

It belongs to the glycosyl hydrolase 3 family. NagZ subfamily.

Its subcellular location is the cytoplasm. It catalyses the reaction Hydrolysis of terminal non-reducing N-acetyl-D-hexosamine residues in N-acetyl-beta-D-hexosaminides.. It participates in cell wall biogenesis; peptidoglycan recycling. Its function is as follows. Plays a role in peptidoglycan recycling by cleaving the terminal beta-1,4-linked N-acetylglucosamine (GlcNAc) from peptide-linked peptidoglycan fragments, giving rise to free GlcNAc, anhydro-N-acetylmuramic acid and anhydro-N-acetylmuramic acid-linked peptides. The protein is Beta-hexosaminidase of Glaesserella parasuis serovar 5 (strain SH0165) (Haemophilus parasuis).